The chain runs to 299 residues: Sulfate adenylyltransferase subunit 2 (299 aa).

Belongs to the PAPS reductase family. CysD subfamily. In terms of assembly, heterodimer composed of CysD, the smaller subunit, and CysN.

It carries out the reaction sulfate + ATP + H(+) = adenosine 5'-phosphosulfate + diphosphate. It functions in the pathway sulfur metabolism; hydrogen sulfide biosynthesis; sulfite from sulfate: step 1/3. With CysN forms the ATP sulfurylase (ATPS) that catalyzes the adenylation of sulfate producing adenosine 5'-phosphosulfate (APS) and diphosphate, the first enzymatic step in sulfur assimilation pathway. APS synthesis involves the formation of a high-energy phosphoric-sulfuric acid anhydride bond driven by GTP hydrolysis by CysN coupled to ATP hydrolysis by CysD. In Colwellia psychrerythraea (strain 34H / ATCC BAA-681) (Vibrio psychroerythus), this protein is Sulfate adenylyltransferase subunit 2.